We begin with the raw amino-acid sequence, 1302 residues long: Zinc finger protein 536 (1302 aa).

The interval 1–26 (MEEASLCLGVSSTAPEAEPHLSGPVL) is disordered. 7 C2H2-type zinc fingers span residues 130 to 152 (YPCP…MRTH), 158 to 180 (FKCP…LRTH), 274 to 297 (FRCT…RILH), 300 to 323 (YKCT…EKAH), 345 to 367 (FRCE…MRKH), 373 to 395 (HCCQ…MKVH), and 631 to 653 (TECP…SRVH). The tract at residues 650 to 736 (SRVHKRDRKS…IGEEAGRAGG (87 aa)) is disordered. Over residues 657 to 676 (RKSDEDALHVGVGLEERRGS) the composition is skewed to basic and acidic residues. The span at 677–698 (GSDQESQSVSRSTTPGSSNVTE) shows a compositional bias: polar residues. 2 C2H2-type zinc fingers span residues 753 to 775 (KDCP…LRIH) and 781 to 803 (YKCP…LERH). Disordered stretches follow at residues 804-832 (HRER…SKAP), 855-897 (GPAS…SKSS), 935-988 (KDTK…APTL), and 1133-1261 (NKNT…GLEK). Residues Ser828 and Ser829 each carry the phosphoserine modification. Over residues 869-883 (GDHSGQATGMPSELS) the composition is skewed to polar residues. Basic and acidic residues predominate over residues 935–973 (KDTKDKVPSDAHPMKAHTAEGGEEKASMKPSQRKSEKSQ). 2 stretches are compositionally biased toward acidic residues: residues 1161-1171 (DLSDIASSEDM) and 1179-1188 (NEDEELDTEP). Low complexity predominate over residues 1198 to 1212 (LSKDGSSEGGDSLLS).

It belongs to the krueppel C2H2-type zinc-finger protein family. In terms of tissue distribution, expressed predominantly in the brain, while a weak signal is also detected in the heart and testis. Expression is abundant in neuronal cells of the cerebral cortex, hippocampus and hypothalamic area (at protein level).

It localises to the nucleus. In terms of biological role, transcriptional repressor that negatively regulates neuron differentiation by repressing retinoic acid-induced gene transcription. Binds and interrupts RARA from binding to retinoic acid response elements (RARE) composed of tandem 5'-AGGTCA-3' sites known as DR1-DR5. Recognizes and binds 2 copies of the core DNA sequence 5'-CCCCCA-3'. In Mus musculus (Mouse), this protein is Zinc finger protein 536 (Znf536).